The sequence spans 315 residues: Biotin synthase (315 aa).

In terms of domain architecture, Radical SAM core spans 39-266 (NSLQFATLLS…KSAIRLTAGR (228 aa)). Residues cysteine 54, cysteine 58, and cysteine 61 each coordinate [4Fe-4S] cluster. 4 residues coordinate [2Fe-2S] cluster: cysteine 98, cysteine 129, cysteine 189, and arginine 261.

Belongs to the radical SAM superfamily. Biotin synthase family. In terms of assembly, homodimer. [4Fe-4S] cluster serves as cofactor. Requires [2Fe-2S] cluster as cofactor.

The catalysed reaction is (4R,5S)-dethiobiotin + (sulfur carrier)-SH + 2 reduced [2Fe-2S]-[ferredoxin] + 2 S-adenosyl-L-methionine = (sulfur carrier)-H + biotin + 2 5'-deoxyadenosine + 2 L-methionine + 2 oxidized [2Fe-2S]-[ferredoxin]. Its pathway is cofactor biosynthesis; biotin biosynthesis; biotin from 7,8-diaminononanoate: step 2/2. Catalyzes the conversion of dethiobiotin (DTB) to biotin by the insertion of a sulfur atom into dethiobiotin via a radical-based mechanism. This chain is Biotin synthase, found in Legionella pneumophila (strain Corby).